The primary structure comprises 115 residues: MAVTQEEIIAGIAEIIEEVTGIEPSEITPEKSFVDDLDIDSLSMVEIAVQTEDKYGVKIPDEDLAGLRTVGDVVTYIQKLEEENPEAAEALRAKIVSENPEAAANVQARLETESK.

The Carrier domain occupies 3 to 81 (VTQEEIIAGI…DVVTYIQKLE (79 aa)). Ser-41 carries the O-(pantetheine 4'-phosphoryl)serine modification.

Belongs to the acyl carrier protein (ACP) family. In terms of processing, 4'-phosphopantetheine is transferred from CoA to a specific serine of apo-AcpM.

The protein resides in the cytoplasm. Functionally, acyl carrier protein involved in meromycolate extension. The chain is Meromycolate extension acyl carrier protein (acpM) from Mycobacterium leprae (strain TN).